A 152-amino-acid polypeptide reads, in one-letter code: Transcriptional regulator MraZ (152 aa).

2 SpoVT-AbrB domains span residues 5 to 52 (ASAI…PIHE) and 81 to 124 (AHEV…DEQA).

Belongs to the MraZ family. Forms oligomers.

It localises to the cytoplasm. The protein resides in the nucleoid. This chain is Transcriptional regulator MraZ, found in Shewanella sp. (strain ANA-3).